Here is a 328-residue protein sequence, read N- to C-terminus: Serine/threonine-protein phosphatase PP2A-2 catalytic subunit (328 aa).

4 residues coordinate Mn(2+): D76, H78, D104, and N136. Catalysis depends on H137, which acts as the Proton donor. 2 residues coordinate Mn(2+): H186 and H260. A Leucine methyl ester modification is found at L328.

This sequence belongs to the PPP phosphatase family. PP-2A subfamily. Mn(2+) is required as a cofactor.

The enzyme catalyses O-phospho-L-seryl-[protein] + H2O = L-seryl-[protein] + phosphate. The catalysed reaction is O-phospho-L-threonyl-[protein] + H2O = L-threonyl-[protein] + phosphate. The chain is Serine/threonine-protein phosphatase PP2A-2 catalytic subunit (PP2A-2) from Blumeria hordei (Barley powdery mildew).